Consider the following 343-residue polypeptide: S-adenosylmethionine:tRNA ribosyltransferase-isomerase (343 aa).

This sequence belongs to the QueA family. As to quaternary structure, monomer.

It localises to the cytoplasm. It carries out the reaction 7-aminomethyl-7-carbaguanosine(34) in tRNA + S-adenosyl-L-methionine = epoxyqueuosine(34) in tRNA + adenine + L-methionine + 2 H(+). It participates in tRNA modification; tRNA-queuosine biosynthesis. In terms of biological role, transfers and isomerizes the ribose moiety from AdoMet to the 7-aminomethyl group of 7-deazaguanine (preQ1-tRNA) to give epoxyqueuosine (oQ-tRNA). The protein is S-adenosylmethionine:tRNA ribosyltransferase-isomerase of Borreliella burgdorferi (strain ATCC 35210 / DSM 4680 / CIP 102532 / B31) (Borrelia burgdorferi).